The following is a 74-amino-acid chain: Kappa-scoloptoxin(07)-Ssm2d (74 aa).

An N-terminal signal peptide occupies residues Met1 to Gly19. A propeptide spanning residues Ala20 to Asn41 is cleaved from the precursor.

Belongs to the scoloptoxin-07 family. Contains 3 disulfide bonds. As to expression, expressed by the venom gland.

The protein resides in the secreted. Inhibits voltage-gated potassium channels. This chain is Kappa-scoloptoxin(07)-Ssm2d, found in Scolopendra mutilans (Chinese red-headed centipede).